We begin with the raw amino-acid sequence, 713 residues long: Polyribonucleotide nucleotidyltransferase (713 aa).

Mg(2+) is bound by residues Asp-493 and Asp-499. The KH domain occupies 560 to 619 (PRMITIKINPEKIRDVIGKGGSVIRALTEETGTTIDISDDGVVTIASTNSEGMAEAKKRI). An S1 motif domain is found at 629-697 (GHVYEGTVLK…EKGRVRLSAK (69 aa)).

It belongs to the polyribonucleotide nucleotidyltransferase family. Mg(2+) is required as a cofactor.

The protein localises to the cytoplasm. The enzyme catalyses RNA(n+1) + phosphate = RNA(n) + a ribonucleoside 5'-diphosphate. Functionally, involved in mRNA degradation. Catalyzes the phosphorolysis of single-stranded polyribonucleotides processively in the 3'- to 5'-direction. The sequence is that of Polyribonucleotide nucleotidyltransferase from Burkholderia pseudomallei (strain 1106a).